The primary structure comprises 204 residues: FMN-dependent NADH:quinone oxidoreductase 5 (204 aa).

Residue S10 participates in FMN binding.

The protein belongs to the azoreductase type 1 family. Homodimer. FMN is required as a cofactor.

It carries out the reaction 2 a quinone + NADH + H(+) = 2 a 1,4-benzosemiquinone + NAD(+). It catalyses the reaction N,N-dimethyl-1,4-phenylenediamine + anthranilate + 2 NAD(+) = 2-(4-dimethylaminophenyl)diazenylbenzoate + 2 NADH + 2 H(+). In terms of biological role, quinone reductase that provides resistance to thiol-specific stress caused by electrophilic quinones. Its function is as follows. Also exhibits azoreductase activity. Catalyzes the reductive cleavage of the azo bond in aromatic azo compounds to the corresponding amines. In Burkholderia lata (strain ATCC 17760 / DSM 23089 / LMG 22485 / NCIMB 9086 / R18194 / 383), this protein is FMN-dependent NADH:quinone oxidoreductase 5.